The sequence spans 292 residues: Peroxisomal 2,4-dienoyl-CoA reductase [(3E)-enoyl-CoA-producing] (292 aa).

A2 is subject to N-acetylalanine. NADP(+)-binding positions include G35–I40, R60–R64, and D86. R60 serves as a coordination point for substrate. Substrate is bound by residues R88, F118, and S126–N128. K151 bears the N6-acetyllysine mark. Residues K182 and P208–T214 contribute to the NADP(+) site. A substrate-binding site is contributed by R219. S287 carries the post-translational modification Phosphoserine. Positions A290–L292 match the Microbody targeting signal motif. Position 291 is an N6-acetyllysine (K291).

The protein belongs to the short-chain dehydrogenases/reductases (SDR) family. 2,4-dienoyl-CoA reductase subfamily. In terms of assembly, monomer, dimer and oligomer.

The protein localises to the peroxisome. It catalyses the reaction a (2E,4Z)-dienoyl-CoA + NADPH + H(+) = a 4,5-saturated-(3E)-enoyl-CoA + NADP(+). It carries out the reaction a (2E,4E)-dienoyl-CoA + NADPH + H(+) = a 4,5-saturated-(3E)-enoyl-CoA + NADP(+). The catalysed reaction is (2E,4E)-hexadienoyl-CoA + NADPH + H(+) = (3E)-hexenoyl-CoA + NADP(+). The enzyme catalyses (2E,4E)-decadienoyl-CoA + NADPH + H(+) = (3E)-decenoyl-CoA + NADP(+). It catalyses the reaction (2E,4Z,7Z,10Z,13Z,16Z,19Z)-docosaheptaenoyl-CoA + NADPH + H(+) = (3E,7Z,10Z,13Z,16Z,19Z)-docosahexaenoyl-CoA + NADP(+). Functionally, auxiliary enzyme of beta-oxidation. Participates in the degradation of unsaturated fatty enoyl-CoA esters having double bonds in both even- and odd-numbered positions in peroxisome. Catalyzes the NADP-dependent reduction of 2,4-dienoyl-CoA to yield trans-3-enoyl-CoA. Has activity towards short and medium chain 2,4-dienoyl-CoAs, but also towards 2,4,7,10,13,16,19-docosaheptaenoyl-CoA, suggesting that it does not constitute a rate limiting step in the peroxisomal degradation of docosahexaenoic acid. This is Peroxisomal 2,4-dienoyl-CoA reductase [(3E)-enoyl-CoA-producing] (DECR2) from Pongo abelii (Sumatran orangutan).